The chain runs to 66 residues: Large ribosomal subunit protein bL35 (66 aa).

Residues 1–14 (MPKMKTKSAAKKRF) are compositionally biased toward basic residues. Residues 1 to 34 (MPKMKTKSAAKKRFSMTATGKVKAGPAGKRHGMI) form a disordered region.

It belongs to the bacterial ribosomal protein bL35 family.

In Paracoccus denitrificans (strain Pd 1222), this protein is Large ribosomal subunit protein bL35.